Here is a 261-residue protein sequence, read N- to C-terminus: tRNA pseudouridine synthase A (261 aa).

Asp51 acts as the Nucleophile in catalysis. Tyr109 lines the substrate pocket.

Belongs to the tRNA pseudouridine synthase TruA family. In terms of assembly, homodimer.

It carries out the reaction uridine(38/39/40) in tRNA = pseudouridine(38/39/40) in tRNA. In terms of biological role, formation of pseudouridine at positions 38, 39 and 40 in the anticodon stem and loop of transfer RNAs. This Idiomarina loihiensis (strain ATCC BAA-735 / DSM 15497 / L2-TR) protein is tRNA pseudouridine synthase A.